A 799-amino-acid chain; its full sequence is Zinc finger protein 227 (799 aa).

Residues 23 to 94 (VTFKDVAVVF…ETETQRSSKH (72 aa)) form the KRAB domain. 19 C2H2-type zinc fingers span residues 250–272 (HPCGECGRGFSYSPRLPLHPNVH), 269–291 (PNVHTGEKCFSQSSHLRTHQRIH), 324–346 (YRCDSCGKGFSSSTGLIIHYRTH), 352–374 (YKCEECGKCFSQSSNFQCHQRVH), 380–402 (YKCEECGKGFGWSVNLRVHQRVH), 408–430 (YKCEECGKGFTQAAHFHIHQRVH), 436–458 (YKCDVCGKGFSHNSPLICHRRVH), 464–486 (YKCEACGKGFTRNTDLHIHFRVH), 492–514 (YKCKECGKGFSQASNLQVHQNVH), 520–542 (FKCETCGKGFSQSSKLQTHQRVH), 548–570 (YRCDVCGKDFSYSSNLKLHQVIH), 576–598 (YKCEECGKGFSWRSNLHAHQRVH), 604–626 (YKCEQCDKSFSQAIDFRVHQRVH), 632–654 (YKCGVCGKGFSQSSGLQSHQRVH), 660–682 (YKCDVCGKGFRYSSQFIYHQRGH), 688–710 (YKCEECGKGFGRSLNLRHHQRVH), 716–738 (HICEECGKAFSLPSNLRVHLGVH), 744–766 (FKCEECGKGFSQSARLEAHQRVH), and 772–794 (YKCDICDKDFRHRSRLTYHQKVH).

Belongs to the krueppel C2H2-type zinc-finger protein family.

The protein localises to the nucleus. Its function is as follows. May be involved in transcriptional regulation. This is Zinc finger protein 227 (ZNF227) from Homo sapiens (Human).